The primary structure comprises 197 residues: Glycerol-3-phosphate acyltransferase (197 aa).

Helical transmembrane passes span leucine 5–isoleucine 25, leucine 70–glycine 90, valine 111–leucine 131, and isoleucine 153–phenylalanine 173.

It belongs to the PlsY family. Probably interacts with PlsX.

It localises to the cell membrane. It carries out the reaction an acyl phosphate + sn-glycerol 3-phosphate = a 1-acyl-sn-glycero-3-phosphate + phosphate. It participates in lipid metabolism; phospholipid metabolism. Functionally, catalyzes the transfer of an acyl group from acyl-phosphate (acyl-PO(4)) to glycerol-3-phosphate (G3P) to form lysophosphatidic acid (LPA). This enzyme utilizes acyl-phosphate as fatty acyl donor, but not acyl-CoA or acyl-ACP. The chain is Glycerol-3-phosphate acyltransferase from Geobacillus sp. (strain WCH70).